The sequence spans 864 residues: DNA mismatch repair protein MutS (864 aa).

607-614 (GPNMGGKS) lines the ATP pocket.

The protein belongs to the DNA mismatch repair MutS family.

Functionally, this protein is involved in the repair of mismatches in DNA. It is possible that it carries out the mismatch recognition step. This protein has a weak ATPase activity. The sequence is that of DNA mismatch repair protein MutS from Neisseria gonorrhoeae (strain NCCP11945).